Here is a 327-residue protein sequence, read N- to C-terminus: Tetraacyldisaccharide 4'-kinase (327 aa).

52–59 provides a ligand contact to ATP; that stretch reads TLGGAGKT.

This sequence belongs to the LpxK family.

It catalyses the reaction a lipid A disaccharide + ATP = a lipid IVA + ADP + H(+). Its pathway is glycolipid biosynthesis; lipid IV(A) biosynthesis; lipid IV(A) from (3R)-3-hydroxytetradecanoyl-[acyl-carrier-protein] and UDP-N-acetyl-alpha-D-glucosamine: step 6/6. Functionally, transfers the gamma-phosphate of ATP to the 4'-position of a tetraacyldisaccharide 1-phosphate intermediate (termed DS-1-P) to form tetraacyldisaccharide 1,4'-bis-phosphate (lipid IVA). This Methylorubrum extorquens (strain PA1) (Methylobacterium extorquens) protein is Tetraacyldisaccharide 4'-kinase.